The following is a 29-amino-acid chain: U-limacoditoxin(12)-Dv72 (29 aa).

Residues Met-1–Cys-15 form the signal peptide. At Asn-27 the chain carries Asparagine amide.

This sequence belongs to the limacoditoxin-12 family. Expressed by the venom secretory cell of the spine. The spine is a cuticular structure containing a single large nucleated venom-secreting cell at its base. It is an independent unit capable of producing, storing and injecting venom. On the back of D.vulnerans caterpillars, spines are grouped together by 50 to 100 to form scoli, of which there are eight in D.vulnerans.

It localises to the secreted. Probable toxin. Does not show insecticidal, antimicrobial and antiparasitic activities. Does not induce increase in intracellular calcium in mouse DRG neurons, suggesting that it does not induce pain. The protein is U-limacoditoxin(12)-Dv72 of Doratifera vulnerans (Mottled cup moth).